The sequence spans 165 residues: Nucleotide-binding protein Cagg_1607 (165 aa).

It belongs to the YajQ family.

In terms of biological role, nucleotide-binding protein. The sequence is that of Nucleotide-binding protein Cagg_1607 from Chloroflexus aggregans (strain MD-66 / DSM 9485).